We begin with the raw amino-acid sequence, 80 residues long: Serine rich endogenous peptide 15 (80 aa).

The signal sequence occupies residues 1–28; the sequence is MSKEKSYVIALLLSLLLCLSFQVGVSEA. 2 consecutive short sequence motifs (SCOOP motif) follow at residues 32–46 and 66–80; these read AVTTRYSDSPRCANG and PRVAVHSNSTKGKGP. Positions 37–80 are disordered; that stretch reads YSDSPRCANGSSASPPTRHCPRGRPRPPTPRVAVHSNSTKGKGP. 2 short sequence motifs (sxS motif essential for MIK2 binding) span residues 38 to 40 and 72 to 74; these read SDS and SNS. Residues 71–80 show a composition bias toward polar residues; it reads HSNSTKGKGP.

Belongs to the serine rich endogenous peptide (SCOOP) phytocytokine family. Interacts with MIK2 (via extracellular leucine-rich repeat domain); this interaction triggers the formation of complex between MIK2 and the BAK1/SERK3 and SERK4 coreceptors, and subsequent BAK1 activation by phosphorylation. As to expression, mostly expressed in leaves, and, to a lower extent, in seedlings shoots, roots, stems, siliques, seeds and flowers.

It localises to the cell membrane. The protein resides in the secreted. The protein localises to the extracellular space. It is found in the apoplast. Its subcellular location is the endoplasmic reticulum. It localises to the golgi apparatus. Brassicaceae-specific phytocytokine (plant endogenous peptide released into the apoplast) perceived by MIK2 in a BAK1/SERK3 and SERK4 coreceptors-dependent manner, that modulates various physiological and antimicrobial processes including growth prevention and reactive oxygen species (ROS) response regulation. Inhibits root growth. The polypeptide is Serine rich endogenous peptide 15 (Arabidopsis thaliana (Mouse-ear cress)).